We begin with the raw amino-acid sequence, 437 residues long: Glucose-1-phosphate adenylyltransferase (437 aa).

Alpha-D-glucose 1-phosphate is bound by residues Y113, G179, E194–K195, and S212.

It belongs to the bacterial/plant glucose-1-phosphate adenylyltransferase family. Homotetramer.

The catalysed reaction is alpha-D-glucose 1-phosphate + ATP + H(+) = ADP-alpha-D-glucose + diphosphate. The protein operates within glycan biosynthesis; glycogen biosynthesis. Its function is as follows. Involved in the biosynthesis of ADP-glucose, a building block required for the elongation reactions to produce glycogen. Catalyzes the reaction between ATP and alpha-D-glucose 1-phosphate (G1P) to produce pyrophosphate and ADP-Glc. In Haemophilus influenzae (strain ATCC 51907 / DSM 11121 / KW20 / Rd), this protein is Glucose-1-phosphate adenylyltransferase.